Reading from the N-terminus, the 630-residue chain is Chaperone protein HtpG (630 aa).

The tract at residues 1–336 is a; substrate-binding; sequence MTTTVEQTAE…TADLPLNVSR (336 aa). The b stretch occupies residues 337–551; the sequence is EMIQESPILA…EDGYDRQMEK (215 aa). Positions 552-630 are c; it reads ILQNAGRLQG…VFERSVRSEG (79 aa).

Belongs to the heat shock protein 90 family. Homodimer.

Its subcellular location is the cytoplasm. Functionally, molecular chaperone. Has ATPase activity. The sequence is that of Chaperone protein HtpG from Rhizobium etli (strain ATCC 51251 / DSM 11541 / JCM 21823 / NBRC 15573 / CFN 42).